The chain runs to 487 residues: Acetyl-coenzyme A carboxylase carboxyl transferase subunit beta, chloroplastic (487 aa).

The interval 180-201 is disordered; sequence SRNSSENEGSSKRTRTKGSDLT. The region spanning 218–487 is the CoA carboxyltransferase N-terminal domain; the sequence is LWVQCENCYG…PLNQKSSKIK (270 aa). Zn(2+) contacts are provided by C222, C225, C241, and C244. A C4-type zinc finger spans residues 222 to 244; sequence CENCYGLNYKKFLKSKMNICEQC.

The protein belongs to the AccD/PCCB family. Acetyl-CoA carboxylase is a heterohexamer composed of biotin carboxyl carrier protein, biotin carboxylase and 2 subunits each of ACCase subunit alpha and ACCase plastid-coded subunit beta (accD). The cofactor is Zn(2+).

The protein localises to the plastid. It is found in the chloroplast stroma. The catalysed reaction is N(6)-carboxybiotinyl-L-lysyl-[protein] + acetyl-CoA = N(6)-biotinyl-L-lysyl-[protein] + malonyl-CoA. It participates in lipid metabolism; malonyl-CoA biosynthesis; malonyl-CoA from acetyl-CoA: step 1/1. Its function is as follows. Component of the acetyl coenzyme A carboxylase (ACC) complex. Biotin carboxylase (BC) catalyzes the carboxylation of biotin on its carrier protein (BCCP) and then the CO(2) group is transferred by the transcarboxylase to acetyl-CoA to form malonyl-CoA. This is Acetyl-coenzyme A carboxylase carboxyl transferase subunit beta, chloroplastic from Atropa belladonna (Belladonna).